A 549-amino-acid chain; its full sequence is Glucose-6-phosphate isomerase (549 aa).

Glu355 (proton donor) is an active-site residue. Active-site residues include His386 and Lys514.

Belongs to the GPI family.

The protein resides in the cytoplasm. It carries out the reaction alpha-D-glucose 6-phosphate = beta-D-fructose 6-phosphate. It functions in the pathway carbohydrate biosynthesis; gluconeogenesis. Its pathway is carbohydrate degradation; glycolysis; D-glyceraldehyde 3-phosphate and glycerone phosphate from D-glucose: step 2/4. Catalyzes the reversible isomerization of glucose-6-phosphate to fructose-6-phosphate. This Salmonella enteritidis PT4 (strain P125109) protein is Glucose-6-phosphate isomerase.